Reading from the N-terminus, the 472-residue chain is WD repeat-containing protein 88 (472 aa).

Residues 1–22 (MASPPRCSPTAHDRECKLPPPS) are disordered. WD repeat units follow at residues 100–139 (GHEH…VVRD), 143–182 (RPKA…LLWK), 184–224 (RYDT…TVSV), 228–267 (HHTR…TLLT), 271–310 (AHSN…FRNC), 319–358 (GHEG…RKLS), and 361–400 (GHND…EIPL). The tract at residues 447-472 (LPADTSSSSSSSERENSPPPRGSKDD) is disordered. Residues 458–472 (SERENSPPPRGSKDD) are compositionally biased toward basic and acidic residues.

This chain is WD repeat-containing protein 88 (WDR88), found in Homo sapiens (Human).